Here is a 149-residue protein sequence, read N- to C-terminus: Glutamate mutase sigma subunit (149 aa).

The B12-binding domain occupies 5-138 (DPTVVLGTIG…DAVKTELDVD (134 aa)). Residues 15–19 (SDAHA), H18, 63–65 (SSL), and 94–98 (NLAVG) each bind adenosylcob(III)alamin.

This sequence belongs to the methylaspartate mutase GlmS subunit family. Heterotetramer composed of 2 epsilon subunits (GlmE) and 2 sigma subunits (GlmS). GlmE exists as a homodimer and GlmS as a monomer. Adenosylcob(III)alamin serves as cofactor.

The catalysed reaction is (2S,3S)-3-methyl-L-aspartate = L-glutamate. The protein operates within amino-acid degradation; L-glutamate degradation via mesaconate pathway; acetate and pyruvate from L-glutamate: step 1/4. In terms of biological role, catalyzes the carbon skeleton rearrangement of L-glutamate to L-threo-3-methylaspartate ((2S,3S)-3-methylaspartate). The protein is Glutamate mutase sigma subunit of Halobacterium salinarum (strain ATCC 700922 / JCM 11081 / NRC-1) (Halobacterium halobium).